Reading from the N-terminus, the 445-residue chain is Phosphoglucosamine mutase (445 aa).

The active-site Phosphoserine intermediate is serine 104. Residues serine 104, aspartate 243, aspartate 245, and aspartate 247 each coordinate Mg(2+). Residue serine 104 is modified to Phosphoserine.

It belongs to the phosphohexose mutase family. The cofactor is Mg(2+). In terms of processing, activated by phosphorylation.

It carries out the reaction alpha-D-glucosamine 1-phosphate = D-glucosamine 6-phosphate. In terms of biological role, catalyzes the conversion of glucosamine-6-phosphate to glucosamine-1-phosphate. The polypeptide is Phosphoglucosamine mutase (Chromobacterium violaceum (strain ATCC 12472 / DSM 30191 / JCM 1249 / CCUG 213 / NBRC 12614 / NCIMB 9131 / NCTC 9757 / MK)).